A 644-amino-acid chain; its full sequence is Karyogamy protein KAR9 (644 aa).

A Phosphoserine modification is found at S496. Disordered stretches follow at residues S506–F534 and P606–Y644. Basic and acidic residues-rich tracts occupy residues S523–F534 and R634–Y644.

The protein localises to the nucleus. Its subcellular location is the cytoplasm. The protein resides in the cytoskeleton. Its function is as follows. Involved in karyogamy. Component of a cortical adaptor complex that orients cytoplasmic microtubules. It may be involved in anchoring cytoplasmic microtubules to the cell cortex. The sequence is that of Karyogamy protein KAR9 (KAR9) from Saccharomyces cerevisiae (strain ATCC 204508 / S288c) (Baker's yeast).